Here is a 68-residue protein sequence, read N- to C-terminus: Conotoxin Vc7.3 (68 aa).

The N-terminal stretch at 1–24 (MIRMGFFLTLTVAVLLTSLICTEA) is a signal peptide. A propeptide spanning residues 25–45 (VPTDKRGMERLFDQVLLKDQR) is cleaved from the precursor. 3 cysteine pairs are disulfide-bonded: Cys-47-Cys-55, Cys-50-Cys-60, and Cys-54-Cys-65.

This sequence belongs to the conotoxin U superfamily. Expressed by the venom duct.

The protein localises to the secreted. The chain is Conotoxin Vc7.3 from Conus victoriae (Queen Victoria cone).